We begin with the raw amino-acid sequence, 86 residues long: Translation initiation factor IF-1 2 (86 aa).

In terms of domain architecture, S1-like spans 1–72; it reads MAKEELLEME…TKARISFRHK (72 aa).

The protein belongs to the IF-1 family. Component of the 30S ribosomal translation pre-initiation complex which assembles on the 30S ribosome in the order IF-2 and IF-3, IF-1 and N-formylmethionyl-tRNA(fMet); mRNA recruitment can occur at any time during PIC assembly.

Its subcellular location is the cytoplasm. Its function is as follows. One of the essential components for the initiation of protein synthesis. Stabilizes the binding of IF-2 and IF-3 on the 30S subunit to which N-formylmethionyl-tRNA(fMet) subsequently binds. Helps modulate mRNA selection, yielding the 30S pre-initiation complex (PIC). Upon addition of the 50S ribosomal subunit IF-1, IF-2 and IF-3 are released leaving the mature 70S translation initiation complex. This is Translation initiation factor IF-1 2 from Aromatoleum aromaticum (strain DSM 19018 / LMG 30748 / EbN1) (Azoarcus sp. (strain EbN1)).